A 121-amino-acid chain; its full sequence is Small ribosomal subunit protein uS13 (121 aa).

Positions 92 to 121 (RKGLPCRGQRTRTNARTRKGPRKAAQSLKK) are disordered.

Belongs to the universal ribosomal protein uS13 family. In terms of assembly, part of the 30S ribosomal subunit. Forms a loose heterodimer with protein S19. Forms two bridges to the 50S subunit in the 70S ribosome.

Located at the top of the head of the 30S subunit, it contacts several helices of the 16S rRNA. In the 70S ribosome it contacts the 23S rRNA (bridge B1a) and protein L5 of the 50S subunit (bridge B1b), connecting the 2 subunits; these bridges are implicated in subunit movement. Contacts the tRNAs in the A and P-sites. This Janthinobacterium sp. (strain Marseille) (Minibacterium massiliensis) protein is Small ribosomal subunit protein uS13.